The primary structure comprises 1015 residues: Tolloid-like protein 2 (1015 aa).

An N-terminal signal peptide occupies residues 1–25; it reads MPRATALGALVSLLLLLPLPRGAGG. Disordered stretches follow at residues 24–49 and 88–130; these read GGLGERPDATADYSELDGEEGTEQQL and VGAT…TTLL. The propeptide occupies 26 to 149; the sequence is LGERPDATAD…AKTFSPRVRR (124 aa). A compositionally biased stretch (polar residues) spans 103–113; it reads SESSPDTTAMD. Over residues 115–125 the composition is skewed to basic and acidic residues; sequence GTKEAGKDGRE. A Peptidase M12A domain is found at 149–349; that stretch reads RATTSRTERI…AQARKLYKCP (201 aa). N171 carries an N-linked (GlcNAc...) asparagine glycan. 4 disulfide bridges follow: C192-C348, C212-C234, C214-C215, and C351-C377. H242 contributes to the Zn(2+) binding site. E243 is a catalytic residue. The Zn(2+) site is built by H246 and H252. CUB domains are found at residues 351-463 and 464-576; these read CGET…YEAT and CGGD…FFKE. Residues N361 and N392 are each glycosylated (N-linked (GlcNAc...) asparagine). Cystine bridges form between C404/C426, C464/C490, C517/C539, C580/C592, C588/C601, C603/C616, C620/C646, C673/C695, C736/C747, C743/C756, C758/C771, and C776/C802. The EGF-like 1; calcium-binding domain occupies 576-617; the sequence is EVDECSWPDHGGCEHRCVNTLGSYKCACDPGYELAADKKMCE. The CUB 3 domain maps to 620–732; sequence CGGFITKLNG…RGFRAHFFSD (113 aa). N628 carries an N-linked (GlcNAc...) asparagine glycan. In terms of domain architecture, EGF-like 2; calcium-binding spans 732-772; sequence DKDECAKDNGGCQHECVNTFGSYLCRCRNGYWLHENGHDCK. CUB domains follow at residues 776-888 and 889-1005; these read CAHK…HSTE and CGGR…YTST. N805 carries an N-linked (GlcNAc...) asparagine glycan. Intrachain disulfides connect C829/C851, C889/C919, and C946/C968. Omega-N-methylarginine occurs at positions 963 and 966.

It depends on Zn(2+) as a cofactor.

The protein resides in the secreted. Protease which specifically processes pro-lysyl oxidase. Required for the embryonic development. Predominant protease, which in the development, influences dorsal-ventral patterning and skeletogenesis. This chain is Tolloid-like protein 2 (TLL2), found in Homo sapiens (Human).